The chain runs to 429 residues: Histidinol dehydrogenase (429 aa).

Residues Y130, Q191, and N214 each contribute to the NAD(+) site. S237, Q259, and H262 together coordinate substrate. Zn(2+) contacts are provided by Q259 and H262. Catalysis depends on proton acceptor residues E327 and H328. Residues H328, D361, E415, and H420 each coordinate substrate. A Zn(2+)-binding site is contributed by D361. H420 contributes to the Zn(2+) binding site.

It belongs to the histidinol dehydrogenase family. It depends on Zn(2+) as a cofactor.

It catalyses the reaction L-histidinol + 2 NAD(+) + H2O = L-histidine + 2 NADH + 3 H(+). Its pathway is amino-acid biosynthesis; L-histidine biosynthesis; L-histidine from 5-phospho-alpha-D-ribose 1-diphosphate: step 9/9. Catalyzes the sequential NAD-dependent oxidations of L-histidinol to L-histidinaldehyde and then to L-histidine. The chain is Histidinol dehydrogenase from Neisseria gonorrhoeae (strain ATCC 700825 / FA 1090).